Consider the following 222-residue polypeptide: Chymotrypsin-1 (222 aa).

Positions isoleucine 1–lysine 221 constitute a Peptidase S1 domain. Cysteine 26 and cysteine 42 form a disulfide bridge. Catalysis depends on charge relay system residues histidine 41 and aspartate 87. Disulfide bonds link cysteine 151–cysteine 164 and cysteine 174–cysteine 198. Serine 178 functions as the Charge relay system in the catalytic mechanism.

Belongs to the peptidase S1 family.

The protein resides in the secreted. It localises to the extracellular space. The catalysed reaction is Preferential cleavage: Tyr-|-Xaa, Trp-|-Xaa, Phe-|-Xaa, Leu-|-Xaa.. In Solenopsis invicta (Red imported fire ant), this protein is Chymotrypsin-1.